A 437-amino-acid chain; its full sequence is MSVITRIHARQIMDSRGNPTVEVDVHTESSFGRAAVPSGASTGVHEAVELRDKDKSVFLGKGVLKAVENVNTLINDALLGMDVTEQEAIDAKLIELDGTPNKSKLGANAILGVSLACAKAGAEYSALPLYRYIGGTTAKTLPVPMMNVLNGGAHADNTVDFQEFMIMPIGFERYSDALRCGAEVFHSLKSLLHDRGLSTAVGDEGGFAPNVESNEQAIELVIEAIGMAGYKAGAPTDRGGLGDGHVMIALDPASSEFYDAEKKKYVFKKSSGRELSSEEMASYWADWASRYPIISIEDGMAEDDWEGWKMLTDKIGGRVQLVGDDLFVTNSKRLAEGIEKGVGNSILIKVNQIGTLTETLQAIELAKRNGYTSVISHRSGETEDTTIAQIAVATNAGQIKTGSMSRSDRMAKYNELLRIEEELGSTALYPGIGAFRV.

Glutamine 162 is a binding site for (2R)-2-phosphoglycerate. Catalysis depends on glutamate 204, which acts as the Proton donor. Residues aspartate 251, glutamate 297, and aspartate 324 each contribute to the Mg(2+) site. (2R)-2-phosphoglycerate contacts are provided by lysine 349, arginine 378, serine 379, and lysine 400. The active-site Proton acceptor is lysine 349.

Belongs to the enolase family. Mg(2+) serves as cofactor.

It is found in the cytoplasm. It localises to the secreted. The protein resides in the cell surface. It carries out the reaction (2R)-2-phosphoglycerate = phosphoenolpyruvate + H2O. Its pathway is carbohydrate degradation; glycolysis; pyruvate from D-glyceraldehyde 3-phosphate: step 4/5. Functionally, catalyzes the reversible conversion of 2-phosphoglycerate (2-PG) into phosphoenolpyruvate (PEP). It is essential for the degradation of carbohydrates via glycolysis. The protein is Enolase 2 of Chlorobaculum tepidum (strain ATCC 49652 / DSM 12025 / NBRC 103806 / TLS) (Chlorobium tepidum).